Here is a 262-residue protein sequence, read N- to C-terminus: DNA repair protein RecO (262 aa).

It belongs to the RecO family.

Its function is as follows. Involved in DNA repair and RecF pathway recombination. In Enterococcus faecalis (strain ATCC 700802 / V583), this protein is DNA repair protein RecO.